The chain runs to 339 residues: Phosphate acyltransferase (339 aa).

It belongs to the PlsX family. Homodimer. Probably interacts with PlsY.

The protein localises to the cytoplasm. It catalyses the reaction a fatty acyl-[ACP] + phosphate = an acyl phosphate + holo-[ACP]. It participates in lipid metabolism; phospholipid metabolism. In terms of biological role, catalyzes the reversible formation of acyl-phosphate (acyl-PO(4)) from acyl-[acyl-carrier-protein] (acyl-ACP). This enzyme utilizes acyl-ACP as fatty acyl donor, but not acyl-CoA. The chain is Phosphate acyltransferase from Helicobacter acinonychis (strain Sheeba).